Consider the following 201-residue polypeptide: 3-isopropylmalate dehydratase small subunit (201 aa).

Belongs to the LeuD family. LeuD type 1 subfamily. Heterodimer of LeuC and LeuD.

The catalysed reaction is (2R,3S)-3-isopropylmalate = (2S)-2-isopropylmalate. Its pathway is amino-acid biosynthesis; L-leucine biosynthesis; L-leucine from 3-methyl-2-oxobutanoate: step 2/4. Catalyzes the isomerization between 2-isopropylmalate and 3-isopropylmalate, via the formation of 2-isopropylmaleate. The sequence is that of 3-isopropylmalate dehydratase small subunit from Salmonella schwarzengrund (strain CVM19633).